Reading from the N-terminus, the 158-residue chain is 6,7-dimethyl-8-ribityllumazine synthase (158 aa).

5-amino-6-(D-ribitylamino)uracil-binding positions include Phe-22, 57 to 59, and 81 to 83; these read AFE and AVI. 86–87 lines the (2S)-2-hydroxy-3-oxobutyl phosphate pocket; it reads GT. His-89 acts as the Proton donor in catalysis. Residue Phe-114 coordinates 5-amino-6-(D-ribitylamino)uracil. Arg-128 serves as a coordination point for (2S)-2-hydroxy-3-oxobutyl phosphate.

This sequence belongs to the DMRL synthase family. As to quaternary structure, forms an icosahedral capsid composed of 60 subunits, arranged as a dodecamer of pentamers.

It catalyses the reaction (2S)-2-hydroxy-3-oxobutyl phosphate + 5-amino-6-(D-ribitylamino)uracil = 6,7-dimethyl-8-(1-D-ribityl)lumazine + phosphate + 2 H2O + H(+). It participates in cofactor biosynthesis; riboflavin biosynthesis; riboflavin from 2-hydroxy-3-oxobutyl phosphate and 5-amino-6-(D-ribitylamino)uracil: step 1/2. In terms of biological role, catalyzes the formation of 6,7-dimethyl-8-ribityllumazine by condensation of 5-amino-6-(D-ribitylamino)uracil with 3,4-dihydroxy-2-butanone 4-phosphate. This is the penultimate step in the biosynthesis of riboflavin. The sequence is that of 6,7-dimethyl-8-ribityllumazine synthase from Shewanella amazonensis (strain ATCC BAA-1098 / SB2B).